A 325-amino-acid polypeptide reads, in one-letter code: Acetyl-coenzyme A carboxylase carboxyl transferase subunit alpha (325 aa).

The region spanning 44 to 298 is the CoA carboxyltransferase C-terminal domain; the sequence is QLEARADQLR…KAAIQDNLQA (255 aa).

The protein belongs to the AccA family. Acetyl-CoA carboxylase is a heterohexamer composed of biotin carboxyl carrier protein (AccB), biotin carboxylase (AccC) and two subunits each of ACCase subunit alpha (AccA) and ACCase subunit beta (AccD).

The protein resides in the cytoplasm. It carries out the reaction N(6)-carboxybiotinyl-L-lysyl-[protein] + acetyl-CoA = N(6)-biotinyl-L-lysyl-[protein] + malonyl-CoA. The protein operates within lipid metabolism; malonyl-CoA biosynthesis; malonyl-CoA from acetyl-CoA: step 1/1. Functionally, component of the acetyl coenzyme A carboxylase (ACC) complex. First, biotin carboxylase catalyzes the carboxylation of biotin on its carrier protein (BCCP) and then the CO(2) group is transferred by the carboxyltransferase to acetyl-CoA to form malonyl-CoA. The chain is Acetyl-coenzyme A carboxylase carboxyl transferase subunit alpha from Picosynechococcus sp. (strain ATCC 27264 / PCC 7002 / PR-6) (Agmenellum quadruplicatum).